An 873-amino-acid polypeptide reads, in one-letter code: Alanine--tRNA ligase (873 aa).

His557, His561, Cys659, and His663 together coordinate Zn(2+).

Belongs to the class-II aminoacyl-tRNA synthetase family. Requires Zn(2+) as cofactor.

It is found in the cytoplasm. It catalyses the reaction tRNA(Ala) + L-alanine + ATP = L-alanyl-tRNA(Ala) + AMP + diphosphate. Its function is as follows. Catalyzes the attachment of alanine to tRNA(Ala) in a two-step reaction: alanine is first activated by ATP to form Ala-AMP and then transferred to the acceptor end of tRNA(Ala). Also edits incorrectly charged Ser-tRNA(Ala) and Gly-tRNA(Ala) via its editing domain. This chain is Alanine--tRNA ligase, found in Nitrosococcus oceani (strain ATCC 19707 / BCRC 17464 / JCM 30415 / NCIMB 11848 / C-107).